The following is a 1818-amino-acid chain: Unconventional myosin-Vb (1818 aa).

The region spanning 8–60 is the Myosin N-terminal SH3-like domain; the sequence is TRYTRVWIPDPDEVWRSAELTKDYKEGDKSLQLRLEDDTILEYPVDVQNNQVP. The tract at residues 21 to 40 is requires for interaction with LIMA1; that stretch reads VWRSAELTKDYKEGDKSLQL. Residues 69–762 form the Myosin motor domain; it reads VGENDLTALS…QVAYLEKLRA (694 aa). Position 163–170 (163–170) interacts with ATP; the sequence is GESGAGKT. Residues 641–663 form an actin-binding region; the sequence is LNLLMETLNATTPHYVRCIKPND. IQ domains are found at residues 765–794, 788–817, 813–842, 836–865, 861–890, and 884–913; these read FREA…ATLS, LRAA…TRAA, RTRA…ATVI, VCRA…EHKA, MEHK…AAIV, and ERDA…EARS. Disordered regions lie at residues 1086-1120 and 1161-1188; these read LRDE…EIGD and QAQL…VDQD. Polar residues predominate over residues 1098–1118; the sequence is PSNQSSLESDSNYPSISTSEI. 2 coiled-coil regions span residues 1140–1261 and 1313–1415; these read MTVF…LILR and LEAQ…ALAQ. Residue Ser1416 is modified to Phosphoserine. The region spanning 1496-1773 is the Dilute domain; the sequence is SSTINGIKKV…IRTIQAQLQE (278 aa).

Belongs to the TRAFAC class myosin-kinesin ATPase superfamily. Myosin family. As to quaternary structure, component of the CART complex, at least composed of ACTN4, HGS/HRS, MYO5B and TRIM3. Interacts with RAB11FIP2. Interacts with RAB11A and RAB8A. Found in a complex with CFTR and RAB11A. Interacts with NPC1L1. Interacts with LIMA1.

It localises to the cytoplasm. May be involved in vesicular trafficking via its association with the CART complex. The CART complex is necessary for efficient transferrin receptor recycling but not for EGFR degradation. Required in a complex with RAB11A and RAB11FIP2 for the transport of NPC1L1 to the plasma membrane. Together with RAB11A participates in CFTR trafficking to the plasma membrane and TF (transferrin) recycling in nonpolarized cells. Together with RAB11A and RAB8A participates in epithelial cell polarization. Together with RAB25 regulates transcytosis. Required for proper localization of bile salt export pump ABCB11 at the apical/canalicular plasma membrane of hepatocytes. This Mus musculus (Mouse) protein is Unconventional myosin-Vb (Myo5b).